The following is a 313-amino-acid chain: Small ribosomal subunit biogenesis GTPase RsgA (313 aa).

Residues 82 to 235 (REKLIAANAT…IIDSPGIQQF (154 aa)) form the CP-type G domain. Residues 127 to 130 (NKTD) and 177 to 185 (GQSGMGKST) contribute to the GTP site. Zn(2+)-binding residues include Cys259, Cys264, His266, and Cys272.

Belongs to the TRAFAC class YlqF/YawG GTPase family. RsgA subfamily. As to quaternary structure, monomer. Associates with 30S ribosomal subunit, binds 16S rRNA. Requires Zn(2+) as cofactor.

The protein localises to the cytoplasm. Functionally, one of several proteins that assist in the late maturation steps of the functional core of the 30S ribosomal subunit. Helps release RbfA from mature subunits. May play a role in the assembly of ribosomal proteins into the subunit. Circularly permuted GTPase that catalyzes slow GTP hydrolysis, GTPase activity is stimulated by the 30S ribosomal subunit. The protein is Small ribosomal subunit biogenesis GTPase RsgA of Nitrosospira multiformis (strain ATCC 25196 / NCIMB 11849 / C 71).